The sequence spans 323 residues: Aquaporin-4 (323 aa).

Over 1-36 (MSDRPAARRWGKCGPLCTRESIMVAFKGVWTQTFWK) the chain is Cytoplasmic. 2 S-palmitoyl cysteine lipidation sites follow: Cys-13 and Cys-17. A helical transmembrane segment spans residues 37–57 (AVTAEFLAMLIFVLLSLGSTI). The Extracellular segment spans residues 58–69 (NWGGAEKPLPVD). A helical transmembrane segment spans residues 70-89 (MVLISLCFGLSIATMVQCFG). The Cytoplasmic portion of the chain corresponds to 90–93 (HISG). Positions 94–101 (GHINPAVT) form an intramembrane region, discontinuously helical. The NPA 1 signature appears at 97 to 99 (NPA). The Cytoplasmic segment spans residues 102–115 (VAMVCTRRISIAKS). Ser-111 carries the phosphoserine; by PKG modification. A helical transmembrane segment spans residues 116 to 136 (VFYIAAQCLGAIIGAGILYLV). Over 137 to 155 (TPPSVVGGLGVTTVHGNLS) the chain is Extracellular. Asn-153 carries N-linked (GlcNAc...) asparagine glycosylation. A helical transmembrane segment spans residues 156–176 (AGHGLLVELIITFQLVFTIFA). Topologically, residues 177-184 (SCDSKRTD) are cytoplasmic. Phosphoserine; by PKC is present on Ser-180. A helical membrane pass occupies residues 185–205 (VTGSIALAIGISVAIGHLFAI). Asn-206 is a glycosylation site (N-linked (GlcNAc...) asparagine). Topologically, residues 206–208 (NYT) are extracellular. The segment at residues 209–222 (GASMNPARSFGPAV) is an intramembrane region (discontinuously helical). Positions 213–215 (NPA) match the NPA 2 motif. Residues 223-231 (IMGNWENHW) are Extracellular-facing. Residues 232 to 252 (IYWVGPIIGAVLAGGLYEYVF) traverse the membrane as a helical segment. Over 253 to 323 (CPDVELKRRF…DPSGEVLSSV (71 aa)) the chain is Cytoplasmic. Ser-276 and Ser-285 each carry phosphoserine. Thr-289 bears the Phosphothreonine mark. At Ser-321 the chain carries Phosphoserine.

Belongs to the MIP/aquaporin (TC 1.A.8) family. As to quaternary structure, homotetramer. The tetramers can form oligomeric arrays in membranes. The size of the oligomers differs between tissues and is smaller in skeletal muscle than in brain. Interaction between AQP4 oligomeric arrays in close-by cells can contribute to cell-cell adhesion. Part of a complex containing MLC1, TRPV4, HEPACAM and ATP1B1. In terms of processing, phosphorylation by PKC at Ser-180 reduces conductance by 50%. Phosphorylation by PKG at Ser-111 in response to glutamate increases conductance by 40%. Isoform 2: Palmitoylated on its N-terminal region. Isoform 1: Not palmitoylated. Detected in brain and lung.

The protein localises to the cell membrane. Its subcellular location is the basolateral cell membrane. It localises to the endosome membrane. The protein resides in the sarcolemma. It is found in the cell projection. It catalyses the reaction H2O(in) = H2O(out). Functionally, forms a water-specific channel. Plays an important role in brain water homeostasis and in glymphatic solute transport. Required for a normal rate of water exchange across the blood brain interface. Required for normal levels of cerebrospinal fluid influx into the brain cortex and parenchyma along paravascular spaces that surround penetrating arteries, and for normal drainage of interstitial fluid along paravenous drainage pathways. Thereby, it is required for normal clearance of solutes from the brain interstitial fluid, including soluble beta-amyloid peptides derived from APP. Plays a redundant role in urinary water homeostasis and urinary concentrating ability. The protein is Aquaporin-4 (AQP4) of Bos taurus (Bovine).